A 206-amino-acid polypeptide reads, in one-letter code: Holliday junction resolvase RecU (206 aa).

The segment at M1–T34 is disordered. The span at K8–G32 shows a compositional bias: polar residues. Mg(2+) contacts are provided by T86, D88, E101, and Q120.

The protein belongs to the RecU family. In terms of assembly, homodimer. Interacts with RuvB. The cofactor is Mg(2+).

The protein resides in the cytoplasm. It carries out the reaction Endonucleolytic cleavage at a junction such as a reciprocal single-stranded crossover between two homologous DNA duplexes (Holliday junction).. Its function is as follows. Has at least 2 separable functions; Holliday junction resolution with generation of monomeric chromosomes, and negative modulation of RecA activity. Endonuclease that resolves Holliday junction intermediates in genetic recombination. Cleaves mobile four-strand junctions by introducing symmetrical nicks in paired strands. Promotes annealing of linear ssDNA with homologous dsDNA. Required for DNA repair, homologous recombination and chromosome segregation. Partially inhibits the hydrolysis of dATP or rATP by RecA. Holliday junction resolution is stimulated by RuvB. This chain is Holliday junction resolvase RecU (recU), found in Bacillus subtilis (strain 168).